The chain runs to 309 residues: MGINFEVSRPKAGSDTNMSNTFHTIGLIGKPNHEGTNLTLKRLHHWLTMQGYSVLVEERVASDVGSHTHSVDLLEIGANCDLAIVVGGDGNMLGAARVLARFDIAVIGVNRGNLGFLTDLPPDTFEEALSKVLEGEFDTEQRFLLEAEVHRHGELKSSNTAVNEAVLHPGKIAHMIEFEVYIDDKFMYSQRADGMIVSTPTGSTAYSLSAGGAILTPNLEAMILVPMFPHTLSCRPIVVDACSIIKLVVSPHNGDNLEVSCDGHVNLSVLPGDEIIVKRSADTLRLIHPKGHNYFHVLRTKLGWGSKLF.

The active-site Proton acceptor is Asp-89. NAD(+)-binding positions include 89 to 90 (DG), 163 to 164 (NE), His-174, Arg-191, Asp-193, and 204 to 209 (TAYSLS).

Belongs to the NAD kinase family. A divalent metal cation serves as cofactor.

It is found in the cytoplasm. The enzyme catalyses NAD(+) + ATP = ADP + NADP(+) + H(+). Involved in the regulation of the intracellular balance of NAD and NADP, and is a key enzyme in the biosynthesis of NADP. Catalyzes specifically the phosphorylation on 2'-hydroxyl of the adenosine moiety of NAD to yield NADP. The sequence is that of NAD kinase from Shewanella piezotolerans (strain WP3 / JCM 13877).